The primary structure comprises 889 residues: Protein translocase subunit SecA (889 aa).

Residues Gln-87, 105–109 (GEGKT), and Asp-494 contribute to the ATP site. The tract at residues 823–889 (ESLRPEEADL…RMDKDTKGKR (67 aa)) is disordered. Residues 867–889 (PRDDRPMNREERRRMDKDTKGKR) are compositionally biased toward basic and acidic residues.

The protein belongs to the SecA family. As to quaternary structure, monomer and homodimer. Part of the essential Sec protein translocation apparatus which comprises SecA, SecYEG and auxiliary proteins SecDF-YajC and YidC.

The protein localises to the cell inner membrane. It localises to the cytoplasm. It catalyses the reaction ATP + H2O + cellular proteinSide 1 = ADP + phosphate + cellular proteinSide 2.. Part of the Sec protein translocase complex. Interacts with the SecYEG preprotein conducting channel. Has a central role in coupling the hydrolysis of ATP to the transfer of proteins into and across the cell membrane, serving as an ATP-driven molecular motor driving the stepwise translocation of polypeptide chains across the membrane. This is Protein translocase subunit SecA from Bdellovibrio bacteriovorus (strain ATCC 15356 / DSM 50701 / NCIMB 9529 / HD100).